A 224-amino-acid polypeptide reads, in one-letter code: PKHD-type hydroxylase Shewmr4_3244 (224 aa).

The Fe2OG dioxygenase domain occupies 78–176 (QFYPPLFNRY…RTAAFMWLQS (99 aa)). Residues histidine 96, aspartate 98, and histidine 157 each coordinate Fe cation. Arginine 167 contacts 2-oxoglutarate.

It depends on Fe(2+) as a cofactor. L-ascorbate serves as cofactor.

In Shewanella sp. (strain MR-4), this protein is PKHD-type hydroxylase Shewmr4_3244.